A 254-amino-acid chain; its full sequence is PAXIP1-associated glutamate-rich protein 1 (254 aa).

Disordered stretches follow at residues 1–111 (MSLA…PPSE) and 127–254 (LQAE…QRKY). Residues 45–62 (KAEDEGEGGREETEREGS) show a composition bias toward basic and acidic residues. Residues 78–98 (EPAEEDSEDWCVPCSDEEVEL) show a composition bias toward acidic residues. A sufficient for interaction with NCOA1 region spans residues 116-160 (YELLAAHGTLELQAEILPRRPPTPEAQSEEERSDEEPEAKEEEEE). T138 is subject to Phosphothreonine. The span at 142 to 159 (QSEEERSDEEPEAKEEEE) shows a compositional bias: acidic residues. Phosphoserine is present on residues S143 and S148. Residues 161–254 (KPHMPTEFDF…SSLFPRQRKY (94 aa)) form a sufficient for interaction with ESR1 region. Over residues 195–223 (QKREARLDKVLSDMKRHKKLEEQILRTGR) the composition is skewed to basic and acidic residues. At S237 the chain carries Phosphoserine.

In terms of assembly, component of the KMT2 family MLL2/MLL3 complex (also named ASCOM complex), at least composed of the HMTs KMT2D and/or KMT2C, the common subunits ASH2L, RBBP5, WDR5 and DPY30, and the complex type-specific subunits PAXIP1/PTIP, PAGR1, NCOA6 and KDM6A; PAXIP1 is required for the association with the MLL2/MLL3 complex. Forms a constitutive complex with PAXIP1/PTIP independently of the MLL2/MLL3 complex. Interacts with NCOA1, ESR1, NR3C1, AR. As to expression, ubiquitously expressed.

It is found in the nucleus. Functionally, its association with the histone methyltransferase MLL2/MLL3 complex is suggesting a role in epigenetic transcriptional activation. However, in association with PAXIP1/PTIP is proposed to function at least in part independently of the MLL2/MLL3 complex. Proposed to be recruited by PAXIP1 to sites of DNA damage where the PAGR1:PAXIP1 complex is required for cell survival in response to DNA damage independently of the MLL2/MLL3 complex. However, its function in DNA damage has been questioned. During immunoglobulin class switching in activated B-cells is involved in transcription regulation of downstream switch regions at the immunoglobulin heavy-chain (Igh) locus independently of the MLL2/MLL3 complex. Involved in both estrogen receptor-regulated gene transcription and estrogen-stimulated G1/S cell-cycle transition. Acts as a transcriptional cofactor for nuclear hormone receptors. Inhibits the induction properties of several steroid receptors such as NR3C1, AR and PPARG; the mechanism of inhibition appears to be gene-dependent. The sequence is that of PAXIP1-associated glutamate-rich protein 1 (PAGR1) from Homo sapiens (Human).